The chain runs to 303 residues: Nucleotide-binding protein SAB0719 (303 aa).

18-25 (GLSGAGKS) contributes to the ATP binding site. Residue 69 to 72 (DLRG) coordinates GTP.

The protein belongs to the RapZ-like family.

Its function is as follows. Displays ATPase and GTPase activities. This chain is Nucleotide-binding protein SAB0719, found in Staphylococcus aureus (strain bovine RF122 / ET3-1).